A 738-amino-acid polypeptide reads, in one-letter code: Catalase-peroxidase 2 (738 aa).

Positions M1 to A26 are cleaved as a signal peptide. A cross-link (tryptophyl-tyrosyl-methioninium (Trp-Tyr) (with M-252)) is located at residues W104–Y226. The active-site Proton acceptor is the H105. The tryptophyl-tyrosyl-methioninium (Tyr-Met) (with W-104) cross-link spans Y226–M252. H267 provides a ligand contact to heme b.

This sequence belongs to the peroxidase family. Peroxidase/catalase subfamily. As to quaternary structure, homodimer or homotetramer. It depends on heme b as a cofactor. Formation of the three residue Trp-Tyr-Met cross-link is important for the catalase, but not the peroxidase activity of the enzyme.

It catalyses the reaction H2O2 + AH2 = A + 2 H2O. The enzyme catalyses 2 H2O2 = O2 + 2 H2O. In terms of biological role, bifunctional enzyme with both catalase and broad-spectrum peroxidase activity. The polypeptide is Catalase-peroxidase 2 (Shewanella amazonensis (strain ATCC BAA-1098 / SB2B)).